Consider the following 905-residue polypeptide: Dopamine D2-like receptor (905 aa).

The disordered stretch occupies residues 1 to 23 (MLSPFDWRRGISSSGTGGTMAAQ). Over 1–377 (MLSPFDWRRG…GELRVVDHNY (377 aa)) the chain is Extracellular. N-linked (GlcNAc...) asparagine glycans are attached at residues Asn-88, Asn-146, Asn-156, Asn-166, Asn-174, Asn-257, Asn-314, and Asn-343. Residues 378-398 (WALILILFPILTLFGNILVIL) form a helical membrane-spanning segment. The Cytoplasmic segment spans residues 399-416 (SVCRERSLQTVTNYFIVS). A helical transmembrane segment spans residues 417-437 (LAIADLLVAVVVMPFAVYFLV). At 438-450 (NGAWALPDVVCDF) the chain is on the extracellular side. The cysteines at positions 448 and 525 are disulfide-linked. Residues 451 to 471 (YIAMDVICSTSSIFNLVAISI) form a helical membrane-spanning segment. Over 472-493 (DRYIAVTQPIKYAKHKNSRRVC) the chain is Cytoplasmic. Residues 494–514 (LTILLVWAISAAIGSPIVLGL) traverse the membrane as a helical segment. At 515-531 (NNTPNREPDVCAFYNAD) the chain is on the extracellular side. Residues 532–552 (FILYSSLSSFYIPCIIMVFLY) form a helical membrane-spanning segment. Over 553–830 (WNIFKALRSR…AKKERKATKT (278 aa)) the chain is Cytoplasmic. 3 disordered regions span residues 600–631 (SRHA…ISPD), 702–753 (ATSA…SVGV), and 780–799 (DSTL…KNSQ). Positions 702-722 (ATSAAPRSSGSPPDSPLPSGA) are enriched in low complexity. Polar residues predominate over residues 723–734 (TLQRSSVSSQRR). Over residues 735-746 (PTGDDSPKRGEP) the composition is skewed to basic and acidic residues. A helical transmembrane segment spans residues 831–851 (LAIVLGVFLFCWLPFFSCNIM). At 852-869 (DAMCAKFKKDCRPGLTAY) the chain is on the extracellular side. A helical membrane pass occupies residues 870–890 (MMTTWLGYINSFVNPVIYTIF). Over 891–905 (NPEFRKAFKKIMHMG) the chain is Cytoplasmic.

This sequence belongs to the G-protein coupled receptor 1 family. Highest expression is in adult heads.

It localises to the cell membrane. Its function is as follows. Receptor for dopamine. The activity of this receptor is mediated by G proteins which inhibit adenylyl cyclase. The protein is Dopamine D2-like receptor of Drosophila melanogaster (Fruit fly).